Consider the following 397-residue polypeptide: Leucine carboxyl methyltransferase 1 (397 aa).

Residues 17-61 (AIQTPPPTDPNAAPAHRPAPRPALGRCRPPHRRRRRLRPPVRPPL) form a disordered region. Residues 26–43 (PNAAPAHRPAPRPALGRC) are compositionally biased toward low complexity. Over residues 44 to 55 (RPPHRRRRRLRP) the composition is skewed to basic residues. S-adenosyl-L-methionine contacts are provided by residues R119, G142, D168, 224–225 (DL), and E259.

This sequence belongs to the methyltransferase superfamily. LCMT family.

It catalyses the reaction [phosphatase 2A protein]-C-terminal L-leucine + S-adenosyl-L-methionine = [phosphatase 2A protein]-C-terminal L-leucine methyl ester + S-adenosyl-L-homocysteine. Methylates the carboxyl group of the C-terminal leucine residue of protein phosphatase 2A catalytic subunits to form alpha-leucine ester residues. The polypeptide is Leucine carboxyl methyltransferase 1 (PPM1) (Cryptococcus neoformans var. neoformans serotype D (strain B-3501A) (Filobasidiella neoformans)).